A 530-amino-acid polypeptide reads, in one-letter code: Formate--tetrahydrofolate ligase (530 aa).

46–53 is a binding site for ATP; the sequence is TPEGEGKT.

The protein belongs to the formate--tetrahydrofolate ligase family.

It catalyses the reaction (6S)-5,6,7,8-tetrahydrofolate + formate + ATP = (6R)-10-formyltetrahydrofolate + ADP + phosphate. The protein operates within one-carbon metabolism; tetrahydrofolate interconversion. The polypeptide is Formate--tetrahydrofolate ligase (Malacoplasma penetrans (strain HF-2) (Mycoplasma penetrans)).